We begin with the raw amino-acid sequence, 432 residues long: Trigger factor (432 aa).

The region spanning 161–246 (EDRVTIDFTG…LKKVEERELP (86 aa)) is the PPIase FKBP-type domain.

Belongs to the FKBP-type PPIase family. Tig subfamily. In terms of assembly, homodimer and monomer. In vivo most of the ribosomes are in complex with monomeric TF. Uncomplexed TF, however, is in a monomer-dimer equilibrium with approximately two thirds of TF existing in a dimeric state.

Its subcellular location is the cytoplasm. The catalysed reaction is [protein]-peptidylproline (omega=180) = [protein]-peptidylproline (omega=0). Its function is as follows. Involved in protein export. Acts as a chaperone by maintaining the newly synthesized protein in an open conformation. Functions as a peptidyl-prolyl cis-trans isomerase. This chain is Trigger factor, found in Escherichia coli O6:K15:H31 (strain 536 / UPEC).